Here is a 376-residue protein sequence, read N- to C-terminus: Phosphoserine aminotransferase (376 aa).

Arg-42 contributes to the L-glutamate binding site. 4 residues coordinate pyridoxal 5'-phosphate: Trp-104, Thr-163, Asp-188, and Gln-211. Lys-212 carries the post-translational modification N6-(pyridoxal phosphate)lysine. 253-254 is a pyridoxal 5'-phosphate binding site; sequence NT.

This sequence belongs to the class-V pyridoxal-phosphate-dependent aminotransferase family. SerC subfamily. In terms of assembly, homodimer. Pyridoxal 5'-phosphate serves as cofactor.

It localises to the cytoplasm. It catalyses the reaction O-phospho-L-serine + 2-oxoglutarate = 3-phosphooxypyruvate + L-glutamate. The enzyme catalyses 4-(phosphooxy)-L-threonine + 2-oxoglutarate = (R)-3-hydroxy-2-oxo-4-phosphooxybutanoate + L-glutamate. Its pathway is amino-acid biosynthesis; L-serine biosynthesis; L-serine from 3-phospho-D-glycerate: step 2/3. The protein operates within cofactor biosynthesis; pyridoxine 5'-phosphate biosynthesis; pyridoxine 5'-phosphate from D-erythrose 4-phosphate: step 3/5. Its function is as follows. Catalyzes the reversible conversion of 3-phosphohydroxypyruvate to phosphoserine and of 3-hydroxy-2-oxo-4-phosphonooxybutanoate to phosphohydroxythreonine. The chain is Phosphoserine aminotransferase from Bordetella avium (strain 197N).